Reading from the N-terminus, the 317-residue chain is MSQVTNTTQEGIYFILTDIPGFEASHIWISIPVCCLYTISIMGNTTILTVIRTEPSVHQRMYLFLSMLALTDLGLTLTTLPTVMQLLWFNVRRISSEACFAQFFFLHGFSFMESSVLLAMSVDCYVAICCPLHYASILTNEVIGRTGLAIICCCVLAVLPSLFLLKRLPFCHSHLLSRSYCLHQDMIRLVCADIRLNSWYGFALALLIIIVDPLLIVISYTLILKNILGTATWAERLRALNNCLSHILAVLVLYIPMVGVSMTHRFAKHASPLVHVIMANIYLLAPPVMNPIIYSVKNKQIQWGMLNFLSLKNMHSR.

The Extracellular portion of the chain corresponds to 1–27 (MSQVTNTTQEGIYFILTDIPGFEASHI). Residue Asn6 is glycosylated (N-linked (GlcNAc...) asparagine). A helical transmembrane segment spans residues 28-48 (WISIPVCCLYTISIMGNTTIL). At 49–56 (TVIRTEPS) the chain is on the cytoplasmic side. A helical membrane pass occupies residues 57 to 77 (VHQRMYLFLSMLALTDLGLTL). The Extracellular segment spans residues 78–101 (TTLPTVMQLLWFNVRRISSEACFA). A disulfide bridge links Cys99 with Cys191. Residues 102 to 122 (QFFFLHGFSFMESSVLLAMSV) traverse the membrane as a helical segment. The Cytoplasmic portion of the chain corresponds to 123 to 141 (DCYVAICCPLHYASILTNE). Residues 142–162 (VIGRTGLAIICCCVLAVLPSL) traverse the membrane as a helical segment. The Extracellular segment spans residues 163-198 (FLLKRLPFCHSHLLSRSYCLHQDMIRLVCADIRLNS). The helical transmembrane segment at 199–219 (WYGFALALLIIIVDPLLIVIS) threads the bilayer. The Cytoplasmic segment spans residues 220–239 (YTLILKNILGTATWAERLRA). The chain crosses the membrane as a helical span at residues 240 to 260 (LNNCLSHILAVLVLYIPMVGV). At 261–275 (SMTHRFAKHASPLVH) the chain is on the extracellular side. The chain crosses the membrane as a helical span at residues 276 to 296 (VIMANIYLLAPPVMNPIIYSV). At 297–317 (KNKQIQWGMLNFLSLKNMHSR) the chain is on the cytoplasmic side.

Belongs to the G-protein coupled receptor 1 family.

Its subcellular location is the cell membrane. Odorant receptor. In Homo sapiens (Human), this protein is Olfactory receptor 51Q1 (OR51Q1).